The following is a 473-amino-acid chain: 3-oxoacyl-[acyl-carrier-protein] synthase I, chloroplastic (473 aa).

Residues 1–10 (MQALQSSSLR) are compositionally biased toward polar residues. The interval 1–26 (MQALQSSSLRASPPNPLRLPSNRQSH) is disordered. A chloroplast-targeting transit peptide spans 1–46 (MQALQSSSLRASPPNPLRLPSNRQSHQLITNARPLRRQQRSFISAS). A Ketosynthase family 3 (KS3) domain is found at 60 to 470 (KKRVVITGMG…GHNSVVAFSA (411 aa)). Active-site for beta-ketoacyl synthase activity residues include Cys-224, His-364, and His-400.

It belongs to the thiolase-like superfamily. Beta-ketoacyl-ACP synthases family. In terms of assembly, homodimer.

The protein localises to the plastid. It localises to the chloroplast stroma. The catalysed reaction is a fatty acyl-[ACP] + malonyl-[ACP] + H(+) = a 3-oxoacyl-[ACP] + holo-[ACP] + CO2. In terms of biological role, catalyzes the condensation reaction of fatty acid synthesis by the addition to an acyl acceptor of two carbons from malonyl-ACP. Specific for elongation from C-10 to unsaturated C-16 and C-18 fatty acids. The protein is 3-oxoacyl-[acyl-carrier-protein] synthase I, chloroplastic (KAS1) of Arabidopsis thaliana (Mouse-ear cress).